The primary structure comprises 240 residues: 7-cyano-7-deazaguanine synthase (240 aa).

14 to 24 (FSGGQDSATCL) is a binding site for ATP. Residues Cys-202, Cys-217, Cys-220, and Cys-223 each contribute to the Zn(2+) site.

Belongs to the QueC family. Zn(2+) serves as cofactor.

It catalyses the reaction 7-carboxy-7-deazaguanine + NH4(+) + ATP = 7-cyano-7-deazaguanine + ADP + phosphate + H2O + H(+). Its pathway is purine metabolism; 7-cyano-7-deazaguanine biosynthesis. Functionally, catalyzes the ATP-dependent conversion of 7-carboxy-7-deazaguanine (CDG) to 7-cyano-7-deazaguanine (preQ(0)). The protein is 7-cyano-7-deazaguanine synthase of Rhodopseudomonas palustris (strain BisB18).